The sequence spans 309 residues: Ribosomal RNA small subunit methyltransferase H (309 aa).

S-adenosyl-L-methionine is bound by residues G33–H35, D53, F79, D100, and Q107.

This sequence belongs to the methyltransferase superfamily. RsmH family.

It is found in the cytoplasm. It catalyses the reaction cytidine(1402) in 16S rRNA + S-adenosyl-L-methionine = N(4)-methylcytidine(1402) in 16S rRNA + S-adenosyl-L-homocysteine + H(+). Its function is as follows. Specifically methylates the N4 position of cytidine in position 1402 (C1402) of 16S rRNA. The chain is Ribosomal RNA small subunit methyltransferase H from Clostridium kluyveri (strain NBRC 12016).